The following is a 375-amino-acid chain: tRNA-specific 2-thiouridylase MnmA (375 aa).

ATP-binding positions include 12–19 (GMSGGVDS) and Met-38. The interaction with target base in tRNA stretch occupies residues 98–100 (NPD). Cys-103 acts as the Nucleophile in catalysis. Cys-103 and Cys-200 are joined by a disulfide. Residue Gly-127 participates in ATP binding. The tract at residues 150–152 (KDQ) is interaction with tRNA. Residue Cys-200 is the Cysteine persulfide intermediate of the active site. Residues 312–313 (RY) form an interaction with tRNA region.

It belongs to the MnmA/TRMU family.

Its subcellular location is the cytoplasm. The enzyme catalyses S-sulfanyl-L-cysteinyl-[protein] + uridine(34) in tRNA + AH2 + ATP = 2-thiouridine(34) in tRNA + L-cysteinyl-[protein] + A + AMP + diphosphate + H(+). Its function is as follows. Catalyzes the 2-thiolation of uridine at the wobble position (U34) of tRNA, leading to the formation of s(2)U34. The polypeptide is tRNA-specific 2-thiouridylase MnmA (Lactobacillus helveticus (strain DPC 4571)).